Here is a 254-residue protein sequence, read N- to C-terminus: Transcription factor CAULIFLOWER (254 aa).

In terms of domain architecture, MADS-box spans 1 to 61 (MGRGRVEMKR…GKLFEYSSES (61 aa)). The 91-residue stretch at 90-180 (QTNWSMEYSR…TKQIKERESI (91 aa)) folds into the K-box domain. The span at 182–191 (RTHQNQSEQQ) shows a compositional bias: polar residues. Residues 182–205 (RTHQNQSEQQNRSHHVAPQPQPQL) are disordered.

Homodimer capable of binding to CArG-box sequences.

It localises to the nucleus. Probable transcription factor that promotes early floral meristem identity in synergy with APETALA1, FRUITFULL and LEAFY. Is required subsequently for the transition of an inflorescence meristem into a floral meristem. Seems to be partially redundant to the function of APETALA1. The chain is Transcription factor CAULIFLOWER (CAL) from Brassica rapa subsp. pekinensis (Chinese cabbage).